Here is a 406-residue protein sequence, read N- to C-terminus: Tryptophan synthase beta chain (406 aa).

The residue at position 99 (K99) is an N6-(pyridoxal phosphate)lysine.

It belongs to the TrpB family. Tetramer of two alpha and two beta chains. Pyridoxal 5'-phosphate serves as cofactor.

The catalysed reaction is (1S,2R)-1-C-(indol-3-yl)glycerol 3-phosphate + L-serine = D-glyceraldehyde 3-phosphate + L-tryptophan + H2O. The protein operates within amino-acid biosynthesis; L-tryptophan biosynthesis; L-tryptophan from chorismate: step 5/5. The beta subunit is responsible for the synthesis of L-tryptophan from indole and L-serine. The polypeptide is Tryptophan synthase beta chain (Rhizobium johnstonii (strain DSM 114642 / LMG 32736 / 3841) (Rhizobium leguminosarum bv. viciae)).